Consider the following 382-residue polypeptide: Chaperone protein DnaJ 1 (382 aa).

One can recognise a J domain in the interval 4–68; the sequence is DYYGILGVDR…DKRRIVDMGG (65 aa). The segment at 134 to 216 adopts a CR-type zinc-finger fold; sequence GAKKDLTLDT…CAGDGRVRAR (83 aa). 8 residues coordinate Zn(2+): Cys-147, Cys-150, Cys-164, Cys-167, Cys-190, Cys-193, Cys-204, and Cys-207. CXXCXGXG motif repeat units lie at residues 147–154, 164–171, 190–197, and 204–211; these read CTKCHGSG, CGTCNGAG, CHTCDGTG, and CTECAGDG.

It belongs to the DnaJ family. In terms of assembly, homodimer. Zn(2+) serves as cofactor.

The protein resides in the cytoplasm. Its function is as follows. Participates actively in the response to hyperosmotic and heat shock by preventing the aggregation of stress-denatured proteins and by disaggregating proteins, also in an autonomous, DnaK-independent fashion. Unfolded proteins bind initially to DnaJ; upon interaction with the DnaJ-bound protein, DnaK hydrolyzes its bound ATP, resulting in the formation of a stable complex. GrpE releases ADP from DnaK; ATP binding to DnaK triggers the release of the substrate protein, thus completing the reaction cycle. Several rounds of ATP-dependent interactions between DnaJ, DnaK and GrpE are required for fully efficient folding. Also involved, together with DnaK and GrpE, in the DNA replication of plasmids through activation of initiation proteins. The polypeptide is Chaperone protein DnaJ 1 (Corynebacterium glutamicum (strain ATCC 13032 / DSM 20300 / JCM 1318 / BCRC 11384 / CCUG 27702 / LMG 3730 / NBRC 12168 / NCIMB 10025 / NRRL B-2784 / 534)).